Here is a 340-residue protein sequence, read N- to C-terminus: Farnesyl pyrophosphate synthase 1 (340 aa).

The isopentenyl diphosphate site is built by Lys-47, Arg-50, and Gln-85. Mg(2+) contacts are provided by Asp-92 and Asp-96. Arg-101 contacts dimethylallyl diphosphate. Residue Arg-102 participates in isopentenyl diphosphate binding. The dimethylallyl diphosphate site is built by Lys-188, Thr-189, Gln-227, Lys-244, and Lys-253.

The protein belongs to the FPP/GGPP synthase family. The cofactor is Mg(2+). In terms of tissue distribution, mainly expressed in trichomes and flowers, and, to a lower extent, in leaves, roots and stems.

The protein resides in the cytoplasm. It is found in the nucleus. It carries out the reaction isopentenyl diphosphate + dimethylallyl diphosphate = (2E)-geranyl diphosphate + diphosphate. The catalysed reaction is isopentenyl diphosphate + (2E)-geranyl diphosphate = (2E,6E)-farnesyl diphosphate + diphosphate. It participates in isoprenoid biosynthesis; farnesyl diphosphate biosynthesis; farnesyl diphosphate from geranyl diphosphate and isopentenyl diphosphate: step 1/1. Its pathway is sesquiterpene biosynthesis. The protein operates within isoprenoid biosynthesis; geranyl diphosphate biosynthesis; geranyl diphosphate from dimethylallyl diphosphate and isopentenyl diphosphate: step 1/1. Functionally, catalyzes the sequential condensation of isopentenyl pyrophosphate with the allylic pyrophosphates, dimethylallyl pyrophosphate, and then with the resultant geranylpyrophosphate to the ultimate product farnesyl pyrophosphate. This Cannabis sativa (Hemp) protein is Farnesyl pyrophosphate synthase 1.